A 328-amino-acid polypeptide reads, in one-letter code: uncharacterized protein (328 aa).

The H-T-H motif DNA-binding region spans 72–91; sequence ALQIRDKFNLQRVIIVPDGE.

Belongs to the SorC transcriptional regulatory family.

This is an uncharacterized protein from Escherichia coli (strain K12).